The following is a 101-amino-acid chain: Small ribosomal subunit protein uS14 (101 aa).

The protein belongs to the universal ribosomal protein uS14 family. Part of the 30S ribosomal subunit. Contacts proteins S3 and S10.

Functionally, binds 16S rRNA, required for the assembly of 30S particles and may also be responsible for determining the conformation of the 16S rRNA at the A site. The chain is Small ribosomal subunit protein uS14 from Colwellia psychrerythraea (strain 34H / ATCC BAA-681) (Vibrio psychroerythus).